The following is a 621-amino-acid chain: Probable bifunctional dTTP/UTP pyrophosphatase/methyltransferase protein (621 aa).

An MAF-like region spans residues 11–223; that stretch reads LHKRVVLASA…PPRPEDLRRS (213 aa). Ser-21 bears the Phosphoserine mark. Asp-88 serves as the catalytic Proton acceptor; for pyrophosphatase activity. Position 228 is a phosphoserine (Ser-228). Thr-234 carries the phosphothreonine modification. The tract at residues 235-279 is disordered; it reads FEDLSDVEGGGSEPTQRDAGSRDEKAEAGEAGQATAEAECHRTRE. Ser-239 carries the post-translational modification Phosphoserine. Over residues 249–262 the composition is skewed to basic and acidic residues; sequence TQRDAGSRDEKAEA. An ASMT-like region spans residues 277–621; it reads TRETLPPFPT…DAILATKVAP (345 aa). Phosphoserine is present on Ser-421. S-adenosyl-L-methionine contacts are provided by residues Asp-482, 508-510, and Arg-525; that span reads GDF.

In the N-terminal section; belongs to the Maf family. YhdE subfamily. This sequence in the C-terminal section; belongs to the class I-like SAM-binding methyltransferase superfamily. Cation-independent O-methyltransferase family. Homodimer. A divalent metal cation serves as cofactor. In terms of tissue distribution, widely expressed. In adult, highly expressed in pancreas, placenta, fibroblast, thymus, prostate, testis, ovary and colon. Expressed at lower levels in spleen, small intestine and leukocytes. In fetus, expressed at high levels in the lung and kidney and at lower level in brain and liver.

The catalysed reaction is dTTP + H2O = dTMP + diphosphate + H(+). The enzyme catalyses UTP + H2O = UMP + diphosphate + H(+). It catalyses the reaction CTP + H2O = CMP + diphosphate + H(+). It carries out the reaction psi-UTP + H2O = psi-UMP + diphosphate + H(+). The catalysed reaction is 5-methyl-UTP + H2O = 5-methyl-UMP + diphosphate + H(+). The enzyme catalyses 5-methyl-CTP + H2O = 5-methyl-CMP + diphosphate + H(+). Functionally, nucleoside triphosphate pyrophosphatase that hydrolyzes dTTP and UTP. Can also hydrolyze CTP and the modified nucleotides pseudo-UTP, 5-methyl-UTP (m(5)UTP) and 5-methyl-CTP (m(5)CTP). Has weak activity with dCTP, 8-oxo-GTP and N(4)-methyl-dCTP. May have a dual role in cell division arrest and in preventing the incorporation of modified nucleotides into cellular nucleic acids. In addition, the presence of the putative catalytic domain of S-adenosyl-L-methionine binding in the C-terminal region argues for a methyltransferase activity. This Homo sapiens (Human) protein is Probable bifunctional dTTP/UTP pyrophosphatase/methyltransferase protein (ASMTL).